The following is a 698-amino-acid chain: Elongation factor G 1 (698 aa).

Positions 8–290 constitute a tr-type G domain; it reads ERYRNIGICA…AVVEFLPAPV (283 aa). GTP contacts are provided by residues 17 to 24, 88 to 92, and 142 to 145; these read AHVDAGKT, DTPGH, and NKMD.

This sequence belongs to the TRAFAC class translation factor GTPase superfamily. Classic translation factor GTPase family. EF-G/EF-2 subfamily.

The protein resides in the cytoplasm. Catalyzes the GTP-dependent ribosomal translocation step during translation elongation. During this step, the ribosome changes from the pre-translocational (PRE) to the post-translocational (POST) state as the newly formed A-site-bound peptidyl-tRNA and P-site-bound deacylated tRNA move to the P and E sites, respectively. Catalyzes the coordinated movement of the two tRNA molecules, the mRNA and conformational changes in the ribosome. The polypeptide is Elongation factor G 1 (Shewanella oneidensis (strain ATCC 700550 / JCM 31522 / CIP 106686 / LMG 19005 / NCIMB 14063 / MR-1)).